A 699-amino-acid polypeptide reads, in one-letter code: Epithelial sodium channel subunit alpha (699 aa).

The tract at residues 1–71 is disordered; the sequence is MLDHTRAPEL…EPRQPTEEEE (71 aa). Over 1–110 the chain is Cytoplasmic; the sequence is MLDHTRAPEL…CSKHNRMKTA (110 aa). The chain crosses the membrane as a helical span at residues 111–131; sequence FWAVLWLCTFGMMYWQFALLF. Residues 132-589 lie on the Extracellular side of the membrane; sequence EEYFSYPVSL…SQWSLWFGSS (458 aa). 10 disulfides stabilise this stretch: Cys-158-Cys-332, Cys-256-Cys-263, Cys-309-Cys-316, Cys-421-Cys-506, Cys-443-Cys-483, Cys-443-Cys-502, Cys-447-Cys-498, Cys-456-Cys-483, Cys-456-Cys-506, and Cys-458-Cys-472. Residues 200 to 270 are gating release of inhibition by proteolysis (GRIP); protease-sensitive region that is responsible for the proteolytic activation of the channel; sequence RRRSTRDLRG…SDCFYQTYSS (71 aa). The segment at 211-244 is disordered; it reads LPHPLQRLRTPPPPNPARSARSASSSVRDNNPQV. The span at 227–238 shows a compositional bias: low complexity; it reads ARSARSASSSVR. The helical transmembrane segment at 590 to 610 threads the bilayer; the sequence is VLSVVEMAELIFDLLVITLIM. The Cytoplasmic segment spans residues 611-699; sequence LLHRFRSRYW…SSACAPAMAL (89 aa). Residues 637-699 form a disordered region; the sequence is ASSFPSRFCP…SSACAPAMAL (63 aa). The span at 656 to 667 shows a compositional bias: low complexity; it reads PQQGTTPPLALT. The PY motif; recruits WW domain-containing proteins and is thereby required for ubiquitination and inhibition of the channel by NEDD4 and NEDD4L signature appears at 669–673; the sequence is PPPAY.

This sequence belongs to the amiloride-sensitive sodium channel (TC 1.A.6) family. SCNN1A subfamily. As to quaternary structure, heterotrimer; containing an alpha/SCNN1A, a beta/SCNN1B and a gamma/SCNN1G subunit. Interacts with WWP1 (via WW domains). Interacts with WWP2 (via WW domains); inhibits the channel. Interacts with BPIFA1; the interaction is indirect via SCNN1B and inhibits the proteolytic processing of SCNN1A and SCNN1G and the activation of ENaC. Interacts with the full-length immature form of PCSK9 (pro-PCSK9). Post-translationally, ubiquitinated. Can be ubiquitinated at multiple sites and undergo monoubiquitination and polyubiquitination. Ubiquitination by NEDD4 or NEDD4L inhibits the ENaC channel through endocytosis, intracellular retention and degradation of its individual subunits. ENaC is activated through the proteolytic maturation of its subunits. Furin cleaves the SCNN1A subunit, which results in a stepwise increase in the open probability of the channel due to the release of an inhibitory tract. BPIFA1, which is recruited by the SCNN1B subunit, prevents the proteolytic activation of ENaC. In terms of processing, N-glycosylated. Expressed in kidney (at protein level). Expressed in lung (at protein level). Expressed in the epididymis (at protein level). In the caput and corpus regions of the epididymis, expressed uniformly on the luminal and basal surfaces of the ducts and in the sperm in the duct lumen. Also expressed in distal colon and, at low levels, in liver.

The protein resides in the apical cell membrane. The protein localises to the cell projection. It localises to the cilium. It is found in the cytoplasmic granule. Its subcellular location is the cytoplasm. The protein resides in the cytoplasmic vesicle. The protein localises to the secretory vesicle. It localises to the acrosome. It is found in the flagellum. It catalyses the reaction Na(+)(in) = Na(+)(out). With respect to regulation, originally identified and characterized by its inhibition by the diuretic drug amiloride. This is one of the three pore-forming subunits of the heterotrimeric epithelial sodium channel (ENaC), a critical regulator of sodium balance and fluid homeostasis. ENaC operates in epithelial tissues, where it mediates the electrodiffusion of sodium ions from extracellular fluid through the apical membrane of cells, with water following osmotically. It plays a key role in maintaining sodium homeostasis through electrogenic sodium reabsorption in the kidneys. Additionally, ENaC is essential for airway surface liquid homeostasis, which is crucial for proper mucus clearance. This is Epithelial sodium channel subunit alpha from Mus musculus (Mouse).